A 170-amino-acid chain; its full sequence is Orotate phosphoribosyltransferase (170 aa).

Residues R86, K87, K90, H92, and 111–119 contribute to the 5-phospho-alpha-D-ribose 1-diphosphate site; that span reads EDVTTSGGS. Orotate contacts are provided by T115 and R143.

This sequence belongs to the purine/pyrimidine phosphoribosyltransferase family. PyrE subfamily. In terms of assembly, homodimer. It depends on Mg(2+) as a cofactor.

The enzyme catalyses orotidine 5'-phosphate + diphosphate = orotate + 5-phospho-alpha-D-ribose 1-diphosphate. Its pathway is pyrimidine metabolism; UMP biosynthesis via de novo pathway; UMP from orotate: step 1/2. In terms of biological role, catalyzes the transfer of a ribosyl phosphate group from 5-phosphoribose 1-diphosphate to orotate, leading to the formation of orotidine monophosphate (OMP). The protein is Orotate phosphoribosyltransferase of Methanoculleus marisnigri (strain ATCC 35101 / DSM 1498 / JR1).